The sequence spans 137 residues: Protein BNS1 (137 aa).

Component of the FEAR (CDC14 early anaphase release) network which promotes CDC14 release from the nucleolus during early anaphase and is required for the efficient segregation of telomeric and nucleolar regions. Although BNS1 can partially compensate for a lack of SPO12 function when overexpressed, it does not appear to play any role in controlling meiotic nuclear division. In Saccharomyces cerevisiae (strain ATCC 204508 / S288c) (Baker's yeast), this protein is Protein BNS1 (BNS1).